We begin with the raw amino-acid sequence, 401 residues long: MNYDHILIRFGEISTKGKNRRSFIERLKQNIRLVLKDYKKVKYFSNRDRMSITLNGENPEEICSLLKNIFGIQSFSLAIKCESKLEDIKKTALAAIEGEYKPGNTFKVETKRAYKQFELDTNAMNAEIGGHILKNTDGLTVDVKHPDIPLRIEIREEATFLTIRNEKGAGGLPVGSAGKAMLMLSGGFDSPVAGFYAMKRGLSVEAVHFFSPPYTSERAKQKVMDLAGCLAKFGGSMTLHIVPFTKTQELIQKQIPENYTMTATRRLMLQIADRIREERKALAIITGESLGQVASQTLESMYAINAVTATPILRPLIGMDKTEIIEKSKEIGTYETSIQPFEDCCTIFTPPSPKTRPKKEKIEHFESFVDFEPLIAEAAAGIETITVYSEQEAHDKFAGLF.

Positions 60 to 165 (EEICSLLKNI…EEATFLTIRN (106 aa)) constitute a THUMP domain. ATP contacts are provided by residues 183–184 (ML), 208–209 (HF), arginine 265, glycine 287, and glutamine 296.

The protein belongs to the ThiI family.

It is found in the cytoplasm. The catalysed reaction is [ThiI sulfur-carrier protein]-S-sulfanyl-L-cysteine + a uridine in tRNA + 2 reduced [2Fe-2S]-[ferredoxin] + ATP + H(+) = [ThiI sulfur-carrier protein]-L-cysteine + a 4-thiouridine in tRNA + 2 oxidized [2Fe-2S]-[ferredoxin] + AMP + diphosphate. The enzyme catalyses [ThiS sulfur-carrier protein]-C-terminal Gly-Gly-AMP + S-sulfanyl-L-cysteinyl-[cysteine desulfurase] + AH2 = [ThiS sulfur-carrier protein]-C-terminal-Gly-aminoethanethioate + L-cysteinyl-[cysteine desulfurase] + A + AMP + 2 H(+). It participates in cofactor biosynthesis; thiamine diphosphate biosynthesis. Its function is as follows. Catalyzes the ATP-dependent transfer of a sulfur to tRNA to produce 4-thiouridine in position 8 of tRNAs, which functions as a near-UV photosensor. Also catalyzes the transfer of sulfur to the sulfur carrier protein ThiS, forming ThiS-thiocarboxylate. This is a step in the synthesis of thiazole, in the thiamine biosynthesis pathway. The sulfur is donated as persulfide by IscS. The sequence is that of Probable tRNA sulfurtransferase from Bacillus velezensis (strain DSM 23117 / BGSC 10A6 / LMG 26770 / FZB42) (Bacillus amyloliquefaciens subsp. plantarum).